The primary structure comprises 215 residues: MVDEAEVARMIKKAKEGDKRNFTQTLEFIMVFKDIDIKKGFAINETVQLPKTSSPSTVCVLASGDMGVRAKNAKADMVVDADGLEKLGTNKRESRKFINRYDFFLADTQLMPVVGKVLGQILGPRGKMPTPVAFNAPIESFLERFRSSVRVRARASLSLSCKIGDETMDDADLVANAMAVYGTVEKKLPQGSKNVRQIMVKTSMGSIVKQSGTVA.

This sequence belongs to the universal ribosomal protein uL1 family. As to quaternary structure, part of the 50S ribosomal subunit.

Its function is as follows. Binds directly to 23S rRNA. Probably involved in E site tRNA release. In terms of biological role, protein L1 is also a translational repressor protein, it controls the translation of its operon by binding to its mRNA. In Cenarchaeum symbiosum (strain A), this protein is Large ribosomal subunit protein uL1.